The primary structure comprises 208 residues: Small ribosomal subunit protein uS4 (208 aa).

Positions 98–158 (RRLDNIAYRL…EKSRKVACIN (61 aa)) constitute an S4 RNA-binding domain.

It belongs to the universal ribosomal protein uS4 family. In terms of assembly, part of the 30S ribosomal subunit. Contacts protein S5. The interaction surface between S4 and S5 is involved in control of translational fidelity.

One of the primary rRNA binding proteins, it binds directly to 16S rRNA where it nucleates assembly of the body of the 30S subunit. Its function is as follows. With S5 and S12 plays an important role in translational accuracy. The protein is Small ribosomal subunit protein uS4 of Geotalea uraniireducens (strain Rf4) (Geobacter uraniireducens).